The sequence spans 667 residues: MSLPRLCLGELINEDIHTWNSLCRQEITIKTYDNSIPISESSKKIRNQQYLTITFPKSSQPGGNKRLRPSEIQVTVPRHDKRNLDELQKPAHIWIRHSLRKKFQSPSINLIVRRQASFRHPYTHITHSKKAESKKYKDDKKETALKKISKKDTGPHEVDEKPKRRNKADKTPSKSSHGSQLSKKSKSKSETNPESKDSISVSIKHQKKEKRYSKDSKEMDFESTSTKKYSKSSKNNSDAVSETCSKNSSNVGLMVHLGESDAESMEFDMWLKNYSQNNSKKPTKKDAKKDAKGKGSDAESVDSKDAKKDKKGATKDTKKGAKKDTESTDAESGDSKDAKKGKKESKKDKKKDAKKDAASDAESGDSKDAKKDSKKGKKDSKKDNKKKDAKKDAESTDAESGDSKDAKKDSKKGKKDSKKDDKKKDAKKDAESTDAESGDSKNAKKDSKKGKKDDKKKDAKKDAVSTDADSESEGDAKKSKKDSKKDKKDLKKDDQKKPAMKSKESTETESDWESKKVKRDSKKDTKKTAKKATESSGAESDVSSKRYLKKTEMFKSSDAESEESLFKPGSKKRVDESDATSTDSKKDAVEPKRGIKMPSRRTTFKEKGKKIGTGRVPPSRERPPLPPCEPILPSPRVKRLCRCQMPPPPPKPRYAPLPEAKWIHKLL.

Disordered regions lie at residues P121–V251 and S275–S634. Residues K129 to P172 are compositionally biased toward basic and acidic residues. A compositionally biased stretch (low complexity) spans S173 to S182. The span at S187–D197 shows a compositional bias: basic and acidic residues. Over residues S223–S237 the composition is skewed to low complexity. A compositionally biased stretch (polar residues) spans D238–V251. Basic and acidic residues-rich tracts occupy residues K284 to E326, S345 to K371, S380 to E394, S417 to E431, G438 to V464, S483 to T506, S521 to T533, K549 to D558, and D583 to R593. Repeat copies occupy residues A287–D305, A306–D337, A338–D368, A369–D405, A406–N442, A443–D475, A476–K516, V517–Y547, and L548–G569. Residues A287 to G569 are 9 X approximate tandem repeats. Pro residues predominate over residues P624–P633.

Interacts with proteins of spermatozoa head including ACTL7A, CCIN, FAM209A and SPACA1; the interactions may be necessary for proper acrosome attachment to the nuclear envelope. In terms of tissue distribution, testis.

It is found in the cytoplasm. The protein localises to the cytoskeleton. Its subcellular location is the perinuclear theca. The protein resides in the calyx. Plays a role in the establishment of normal sperm morphology during spermatogenesis and is required for acrosome attachment to the nuclear envelope. This Bos taurus (Bovine) protein is Cylicin-1 (CYLC1).